Reading from the N-terminus, the 294-residue chain is 4-hydroxy-tetrahydrodipicolinate synthase (294 aa).

Thr45 contacts pyruvate. Tyr133 (proton donor/acceptor) is an active-site residue. Lys161 (schiff-base intermediate with substrate) is an active-site residue. Ile203 contributes to the pyruvate binding site.

Belongs to the DapA family. As to quaternary structure, homotetramer; dimer of dimers.

Its subcellular location is the cytoplasm. It catalyses the reaction L-aspartate 4-semialdehyde + pyruvate = (2S,4S)-4-hydroxy-2,3,4,5-tetrahydrodipicolinate + H2O + H(+). Its pathway is amino-acid biosynthesis; L-lysine biosynthesis via DAP pathway; (S)-tetrahydrodipicolinate from L-aspartate: step 3/4. Its function is as follows. Catalyzes the condensation of (S)-aspartate-beta-semialdehyde [(S)-ASA] and pyruvate to 4-hydroxy-tetrahydrodipicolinate (HTPA). The polypeptide is 4-hydroxy-tetrahydrodipicolinate synthase (Shewanella sp. (strain ANA-3)).